The chain runs to 887 residues: Valine--tRNA ligase (887 aa).

Residues 45–55 (PNVTGILHMGH) carry the 'HIGH' region motif. Positions 528–532 (KMSKS) match the 'KMSKS' region motif. K531 provides a ligand contact to ATP. Positions 817 to 887 (TGLLNNEAEI…LKESLKSFEE (71 aa)) form a coiled coil.

This sequence belongs to the class-I aminoacyl-tRNA synthetase family. ValS type 1 subfamily. As to quaternary structure, monomer.

The protein localises to the cytoplasm. It catalyses the reaction tRNA(Val) + L-valine + ATP = L-valyl-tRNA(Val) + AMP + diphosphate. Functionally, catalyzes the attachment of valine to tRNA(Val). As ValRS can inadvertently accommodate and process structurally similar amino acids such as threonine, to avoid such errors, it has a 'posttransfer' editing activity that hydrolyzes mischarged Thr-tRNA(Val) in a tRNA-dependent manner. This Fusobacterium nucleatum subsp. nucleatum (strain ATCC 25586 / DSM 15643 / BCRC 10681 / CIP 101130 / JCM 8532 / KCTC 2640 / LMG 13131 / VPI 4355) protein is Valine--tRNA ligase.